We begin with the raw amino-acid sequence, 571 residues long: MTRISRSAYAEIYGPTVVGGVGDRVRLADTLLLAEVEKDHTIFGEEVKFGGGKVIRDGMGQSQRLATDCVDTVITNALIIDAVTGIVKADIGIKDGLISGIGKAGNPDTQPGVTIIIGASTEVVAGEGLIVTAGAIDTHIHFICPQQIEEALATGTTTMIGGGTGPATGSLATTSTSGPWHMAAMLQALDAFPVNVGLFGKGSSSSHGALLEQVRAGAMGLKIHEDWASTPASIDTCLNVAEETDIQVAIHSDTLNESGFVEDTFAAFKGRTIHSFHTEGAGGGHAPDIIRAAGMPNVLPASTNPTMPFTRNTIDEHLDMVMVCHHLDPSIAEDLAFAESRIRRETIAAEDILHDLGAFSIMSSDSQAMGRVGEIVLRTWQTAHKMKLQRGPLQGDSERSDNERIKRYIAKYTINPAVAHGIAHLVGSVEVGKLADLVLWKPAFFGVKVNMVLKSGMAVSASIGDMGASISTPQPVQIRPMWGSHGKALRTSVAFVSQVSLSNPAVSELGLNKRLEAVRGCRGVTKHDMVRNNWLPAISVDPQTYQVYADGQLLRCEALAELPMAQRYFLF.

The Urease domain maps to 134-571 (GAIDTHIHFI…LPMAQRYFLF (438 aa)). Ni(2+) contacts are provided by His139, His141, and Lys222. Lys222 bears the N6-carboxylysine mark. Position 224 (His224) interacts with substrate. Ni(2+) is bound by residues His251 and His277. His325 functions as the Proton donor in the catalytic mechanism. Asp365 provides a ligand contact to Ni(2+).

The protein belongs to the metallo-dependent hydrolases superfamily. Urease alpha subunit family. Heterotrimer of UreA (gamma), UreB (beta) and UreC (alpha) subunits. Three heterotrimers associate to form the active enzyme. It depends on Ni cation as a cofactor. In terms of processing, carboxylation allows a single lysine to coordinate two nickel ions.

It is found in the cytoplasm. The enzyme catalyses urea + 2 H2O + H(+) = hydrogencarbonate + 2 NH4(+). It functions in the pathway nitrogen metabolism; urea degradation; CO(2) and NH(3) from urea (urease route): step 1/1. The chain is Urease subunit alpha from Bordetella pertussis (strain Tohama I / ATCC BAA-589 / NCTC 13251).